A 441-amino-acid chain; its full sequence is Ribosomal protein uS12 methylthiotransferase RimO (441 aa).

An MTTase N-terminal domain is found at 8–118 (PKIGFVSLGC…VLQHVHHYVP (111 aa)). The [4Fe-4S] cluster site is built by Cys17, Cys53, Cys82, Cys150, Cys154, and Cys157. Positions 136–373 (LTPRHYAYLK…MQLQQQISAE (238 aa)) constitute a Radical SAM core domain. In terms of domain architecture, TRAM spans 376–441 (QEKVGREILV…DEYDLWGSRV (66 aa)).

It belongs to the methylthiotransferase family. RimO subfamily. [4Fe-4S] cluster is required as a cofactor.

It is found in the cytoplasm. It catalyses the reaction L-aspartate(89)-[ribosomal protein uS12]-hydrogen + (sulfur carrier)-SH + AH2 + 2 S-adenosyl-L-methionine = 3-methylsulfanyl-L-aspartate(89)-[ribosomal protein uS12]-hydrogen + (sulfur carrier)-H + 5'-deoxyadenosine + L-methionine + A + S-adenosyl-L-homocysteine + 2 H(+). In terms of biological role, catalyzes the methylthiolation of an aspartic acid residue of ribosomal protein uS12. This is Ribosomal protein uS12 methylthiotransferase RimO from Salmonella arizonae (strain ATCC BAA-731 / CDC346-86 / RSK2980).